Here is a 164-residue protein sequence, read N- to C-terminus: Methanogen homoaconitase small subunit 2 (164 aa).

The YLRT motif lies at Tyr-26–Thr-29.

This sequence belongs to the LeuD family. LeuD type 2 subfamily. As to quaternary structure, heterotetramer of 2 HacA and 2 HacB proteins. Cannot form a complex with LeuC.

The enzyme catalyses (2R)-homocitrate = (2R,3S)-homoisocitrate. It catalyses the reaction (2R)-homocitrate = cis-homoaconitate + H2O. The catalysed reaction is (2R,3S)-homoisocitrate = cis-homoaconitate + H2O. It carries out the reaction cis-(homo)2aconitate + H2O = (2R,3S)-iso(homo)2citrate. The enzyme catalyses cis-(homo)3aconitate + H2O = (2R,3S)-iso(homo)3citrate. Its pathway is organic acid metabolism; 2-oxosuberate biosynthesis. Its function is as follows. Component of a hydro-lyase with broad substrate specificity for cis-unsaturated tricarboxylic acids. Catalyzes both the reversible dehydration of (R)-homocitrate ((R)-2-hydroxybutane-1,2,4-tricarboxylate) to produce cis-homoaconitate ((Z)-but-1-ene-1,2,4-tricarboxylate), and its hydration to homoisocitrate ((1R,2S)-1-hydroxybutane-1,2,4-tricarboxylate). Is also able to hydrate the analogous longer chain substrates cis-homo(2)-aconitate, cis-homo(3)-aconitate. These reactions are part of the biosynthesis pathway of coenzyme B. In Methanosarcina acetivorans (strain ATCC 35395 / DSM 2834 / JCM 12185 / C2A), this protein is Methanogen homoaconitase small subunit 2 (hacB2).